Consider the following 338-residue polypeptide: Large ribosomal subunit protein uL10 (338 aa).

The disordered stretch occupies residues 298–338 (TVQQSQSQQPAAEEKKEEKKEEEKKGPSEEEIASGLASLFG). Basic and acidic residues predominate over residues 309 to 325 (AEEKKEEKKEEEKKGPS).

This sequence belongs to the universal ribosomal protein uL10 family. Part of the 50S ribosomal subunit. Forms part of the ribosomal stalk which helps the ribosome interact with GTP-bound translation factors. Forms a heptameric L10(L12)2(L12)2(L12)2 complex, where L10 forms an elongated spine to which the L12 dimers bind in a sequential fashion.

Forms part of the ribosomal stalk, playing a central role in the interaction of the ribosome with GTP-bound translation factors. This is Large ribosomal subunit protein uL10 from Saccharolobus solfataricus (strain ATCC 35092 / DSM 1617 / JCM 11322 / P2) (Sulfolobus solfataricus).